Here is a 428-residue protein sequence, read N- to C-terminus: Enolase (428 aa).

A (2R)-2-phosphoglycerate-binding site is contributed by glutamine 163. The Proton donor role is filled by glutamate 205. Mg(2+) contacts are provided by aspartate 242, glutamate 286, and aspartate 313. Positions 338, 367, 368, and 389 each coordinate (2R)-2-phosphoglycerate. Lysine 338 (proton acceptor) is an active-site residue.

Belongs to the enolase family. The cofactor is Mg(2+).

The protein localises to the cytoplasm. It is found in the secreted. Its subcellular location is the cell surface. It catalyses the reaction (2R)-2-phosphoglycerate = phosphoenolpyruvate + H2O. It functions in the pathway carbohydrate degradation; glycolysis; pyruvate from D-glyceraldehyde 3-phosphate: step 4/5. Catalyzes the reversible conversion of 2-phosphoglycerate (2-PG) into phosphoenolpyruvate (PEP). It is essential for the degradation of carbohydrates via glycolysis. This Lactobacillus helveticus (strain DPC 4571) protein is Enolase.